The following is a 373-amino-acid chain: Transcription factor bHLH87 (373 aa).

Positions 127 to 227 are disordered; the sequence is SAESENREIT…GGSSNISFQH (101 aa). A compositionally biased stretch (basic and acidic residues) spans 188-218; sequence PQDDSEKGGFKLIYDENQSKSKKPRTEKERG. Positions 275 to 324 constitute a bHLH domain; the sequence is ISTDPQTVAARQRRERISEKIRVLQTLVPGGTKMDTASMLDEAANYLKFL.

In terms of assembly, homodimer. Flowers.

The protein resides in the nucleus. The polypeptide is Transcription factor bHLH87 (BHLH87) (Arabidopsis thaliana (Mouse-ear cress)).